Reading from the N-terminus, the 170-residue chain is Probable calcium-binding protein CML27 (170 aa).

Position 2 is an N-acetylalanine (alanine 2). 4 consecutive EF-hand domains span residues 19–54 (ANPE…MGTS), 55–85 (YTET…TLCR), 88–123 (SSAA…LGMS), and 136–159 (VDAD…SSLL). Positions 32, 34, 36, 38, 43, 68, 70, 72, 74, 79, 101, 103, 105, 112, 137, 139, 141, 143, and 148 each coordinate Ca(2+).

Potential calcium sensor. This Arabidopsis thaliana (Mouse-ear cress) protein is Probable calcium-binding protein CML27 (CML27).